We begin with the raw amino-acid sequence, 143 residues long: Transcriptional regulator MraZ (143 aa).

SpoVT-AbrB domains lie at 5 to 47 (EFEH…PLSE) and 76 to 119 (AVQC…NKAR).

Belongs to the MraZ family. In terms of assembly, forms oligomers.

The protein localises to the cytoplasm. It localises to the nucleoid. The protein is Transcriptional regulator MraZ of Pediococcus pentosaceus (strain ATCC 25745 / CCUG 21536 / LMG 10740 / 183-1w).